The sequence spans 625 residues: 1-deoxy-D-xylulose-5-phosphate synthase 1 (625 aa).

Thiamine diphosphate is bound by residues H74 and 115–117; that span reads GHT. Position 146 (D146) interacts with Mg(2+). Residues 147 to 148, N175, Y286, and E368 each bind thiamine diphosphate; that span reads GS. Residue N175 coordinates Mg(2+).

This sequence belongs to the transketolase family. DXPS subfamily. In terms of assembly, homodimer. It depends on Mg(2+) as a cofactor. Thiamine diphosphate serves as cofactor.

It carries out the reaction D-glyceraldehyde 3-phosphate + pyruvate + H(+) = 1-deoxy-D-xylulose 5-phosphate + CO2. It functions in the pathway metabolic intermediate biosynthesis; 1-deoxy-D-xylulose 5-phosphate biosynthesis; 1-deoxy-D-xylulose 5-phosphate from D-glyceraldehyde 3-phosphate and pyruvate: step 1/1. Functionally, catalyzes the acyloin condensation reaction between C atoms 2 and 3 of pyruvate and glyceraldehyde 3-phosphate to yield 1-deoxy-D-xylulose-5-phosphate (DXP). The protein is 1-deoxy-D-xylulose-5-phosphate synthase 1 of Geobacter metallireducens (strain ATCC 53774 / DSM 7210 / GS-15).